The chain runs to 510 residues: Transcriptional regulatory protein GAT1 (510 aa).

At serine 167 the chain carries Phosphoserine. The span at 220–256 (NHSHNSSHNNNSPSIANNTNANTNTNTSASTNTNSPL) shows a compositional bias: low complexity. Disordered regions lie at residues 220-311 (NHSH…IKCS) and 358-383 (QRSS…AAGK). Phosphoserine occurs at positions 262 and 270. A compositionally biased stretch (basic residues) spans 274-287 (SSVRKKKPALKKIK). Residues 294 to 306 (SSATPPSNTSSNP) are compositionally biased toward low complexity. The GATA-type zinc finger occupies 310–334 (CSNCTTSTTPLWRKDPKGLPLCNAC). Phosphothreonine is present on threonine 369. Phosphoserine occurs at positions 399 and 418.

It is found in the nucleus. Functionally, positive regulator of multiple nitrogen catabolic genes. The sequence is that of Transcriptional regulatory protein GAT1 (GAT1) from Saccharomyces cerevisiae (strain ATCC 204508 / S288c) (Baker's yeast).